We begin with the raw amino-acid sequence, 624 residues long: Bifunctional 3'-phosphoadenosine 5'-phosphosulfate synthase 1 (624 aa).

Met1 bears the N-acetylmethionine mark. Residues 1–225 (MEIPGSLCKK…VVELLQERDI (225 aa)) form an adenylyl-sulfate kinase region. An N6-acetyllysine modification is found at Lys12. An ATP-binding site is contributed by 62–67 (GAGKTT). Residues 89 to 92 (DNIR), Phe101, 106 to 109 (REEN), 132 to 133 (IS), Lys171, and 184 to 185 (GF) each bind adenosine 5'-phosphosulfate. ATP is bound by residues Cys207, Cys212, 419–422 (QLRN), 521–525 (GRDPA), and Ala563. The interval 234–624 (VKELYVPENK…VEYYKSLEKA (391 aa)) is sulfate adenylyltransferase.

The protein in the N-terminal section; belongs to the APS kinase family. In the C-terminal section; belongs to the sulfate adenylyltransferase family. In terms of assembly, homodimer. Expressed in the neonatal brain and in cartilage.

The enzyme catalyses sulfate + ATP + H(+) = adenosine 5'-phosphosulfate + diphosphate. It carries out the reaction adenosine 5'-phosphosulfate + ATP = 3'-phosphoadenylyl sulfate + ADP + H(+). It participates in sulfur metabolism; sulfate assimilation. In terms of biological role, bifunctional enzyme with both ATP sulfurylase and APS kinase activity, which mediates two steps in the sulfate activation pathway. The first step is the transfer of a sulfate group to ATP to yield adenosine 5'-phosphosulfate (APS), and the second step is the transfer of a phosphate group from ATP to APS yielding 3'-phosphoadenylylsulfate (PAPS: activated sulfate donor used by sulfotransferase). In mammals, PAPS is the sole source of sulfate; APS appears to be only an intermediate in the sulfate-activation pathway. Required for normal biosynthesis of sulfated L-selectin ligands in endothelial cells. In Mus musculus (Mouse), this protein is Bifunctional 3'-phosphoadenosine 5'-phosphosulfate synthase 1 (Papss1).